The primary structure comprises 249 residues: Pyridoxine 5'-phosphate synthase (249 aa).

N10 serves as a coordination point for 3-amino-2-oxopropyl phosphate. Residue 12 to 13 (DH) participates in 1-deoxy-D-xylulose 5-phosphate binding. R21 serves as a coordination point for 3-amino-2-oxopropyl phosphate. H46 acts as the Proton acceptor in catalysis. The 1-deoxy-D-xylulose 5-phosphate site is built by R48 and H53. E73 serves as the catalytic Proton acceptor. T103 contacts 1-deoxy-D-xylulose 5-phosphate. H194 acts as the Proton donor in catalysis. 3-amino-2-oxopropyl phosphate contacts are provided by residues G195 and 216–217 (GH).

Belongs to the PNP synthase family. Homooctamer; tetramer of dimers.

It is found in the cytoplasm. The enzyme catalyses 3-amino-2-oxopropyl phosphate + 1-deoxy-D-xylulose 5-phosphate = pyridoxine 5'-phosphate + phosphate + 2 H2O + H(+). Its pathway is cofactor biosynthesis; pyridoxine 5'-phosphate biosynthesis; pyridoxine 5'-phosphate from D-erythrose 4-phosphate: step 5/5. Catalyzes the complicated ring closure reaction between the two acyclic compounds 1-deoxy-D-xylulose-5-phosphate (DXP) and 3-amino-2-oxopropyl phosphate (1-amino-acetone-3-phosphate or AAP) to form pyridoxine 5'-phosphate (PNP) and inorganic phosphate. This chain is Pyridoxine 5'-phosphate synthase, found in Rhodospirillum rubrum (strain ATCC 11170 / ATH 1.1.1 / DSM 467 / LMG 4362 / NCIMB 8255 / S1).